A 479-amino-acid chain; its full sequence is Transcript termination protein A18 (479 aa).

The Helicase ATP-binding domain occupies 99–255 (KNKHKRPTYI…NDIINVSNSL (157 aa)). 112 to 119 (LACGFGKT) provides a ligand contact to ATP. Residues 205–208 (DESH) carry the DESH box motif. In terms of domain architecture, Helicase C-terminal spans 308 to 469 (ILDTIIYDFN…EKKGKKKELA (162 aa)).

Belongs to the helicase family. Poxviruses subfamily. As to quaternary structure, interacts with G2. Might be part of a transcription complex composed at least of G2, A18, and H5.

The protein localises to the virion. Its function is as follows. DNA helicase which seems to act as a postreplicative transcription termination factor. Involved in ATP-dependent release of nascent RNA. Forms a stable complex with single-stranded DNA, and to a lesser extent RNA. This chain is Transcript termination protein A18, found in Homo sapiens (Human).